Consider the following 85-residue polypeptide: Antitoxin VapB4 (85 aa).

The protein belongs to the phD/YefM antitoxin family. Interacts with cognate toxin VapC4.

Functionally, antitoxin component of a type II toxin-antitoxin (TA) system. Antitoxin that counteracts the effect of the VapC4 toxin. This chain is Antitoxin VapB4 (vapB4), found in Mycobacterium tuberculosis (strain CDC 1551 / Oshkosh).